The following is a 60-amino-acid chain: Beta-toxin BotIT2 (60 aa).

One can recognise an LCN-type CS-alpha/beta domain in the interval 1–60 (DGYIKGYKGCKITCVINDDYCDTECKAEGGTYGYCWKWGLACWCEDLPDEKRWKSETNTC). Cystine bridges form between cysteine 10–cysteine 60, cysteine 14–cysteine 35, cysteine 21–cysteine 42, and cysteine 25–cysteine 44.

This sequence belongs to the long (4 C-C) scorpion toxin superfamily. Sodium channel inhibitor family. Beta subfamily. Expressed by the venom gland.

The protein resides in the secreted. In terms of biological role, beta toxins bind voltage-independently at site-4 of sodium channels (Nav) and shift the voltage of activation toward more negative potentials thereby affecting sodium channel activation and promoting spontaneous and repetitive firing. This toxin specifically acts by inducing a new current with very slow activation/deactivation kinetics due to the transformation of normal fast channels into slow ones. It possess properties of excitatory and depressant toxins. It is highly active on insects and less active on mammals. The chain is Beta-toxin BotIT2 from Buthus occitanus tunetanus (Common European scorpion).